The following is a 304-amino-acid chain: Mas-related G-protein coupled receptor member A (304 aa).

The Extracellular portion of the chain corresponds to 1-17; it reads MDKTIPGSFNSRTLIPN. The helical transmembrane segment at 18–38 threads the bilayer; that stretch reads LLIIISGLVGLIGNAMVFWLL. At 39-46 the chain is on the cytoplasmic side; sequence GFRLARNA. Residues 47 to 67 traverse the membrane as a helical segment; it reads FSVYILNLALADFLFLLCHII. Topologically, residues 68–80 are extracellular; sequence DSTLLLLKFSYPN. Residues 81–101 form a helical membrane-spanning segment; that stretch reads IIFLPCFNTVMMVPYIAGLSM. Residues 102 to 132 lie on the Cytoplasmic side of the membrane; it reads LSAISTERCLSVVCPIWYRCRRPKHTSTVMC. Residues 133-153 traverse the membrane as a helical segment; the sequence is SAIWVLSLLICILNRYFCGFL. Over 154–167 the chain is Extracellular; that stretch reads DTKYEKDNRCLASN. Residues 168–188 traverse the membrane as a helical segment; the sequence is FFTAACLIFLFVVLCLSSLAL. The Cytoplasmic segment spans residues 189-211; it reads LVRLFCGAGRMKLTRLYATIMLT. Residues 212 to 232 form a helical membrane-spanning segment; it reads VLVFLLCGLPFGIHWFLLIWI. The Extracellular portion of the chain corresponds to 233–244; that stretch reads KIDYGKFAYGLY. A helical transmembrane segment spans residues 245–265; it reads LAALVLTAVNSCANPIIYFFV. Residues 266 to 304 are Cytoplasmic-facing; the sequence is GSFRHQKHQTLKMVLQRALQDTPETAENTVEMSSSKVEP.

Belongs to the G-protein coupled receptor 1 family. Mas subfamily. Expressed in a subset of IB4-positive small diameter nociceptive dorsal root neurons.

Its subcellular location is the cell membrane. In terms of biological role, orphan receptor activated by a subset of RFamide-family neuropeptides such as FLRF-amide and FMRF-amide. Mediates its action by association with G proteins that activate a phosphatidylinositol-calcium second messenger system. Its effect is mediated by G(q) and G(11) proteins. May regulate the function of nociceptive neurons by modulation of pain perception. This Rattus norvegicus (Rat) protein is Mas-related G-protein coupled receptor member A (Mrgpra).